The chain runs to 949 residues: Valine--tRNA ligase (949 aa).

The short motif at 40-50 (PNVTGSLHMGH) is the 'HIGH' region element. Positions 553 to 557 (KMSKS) match the 'KMSKS' region motif. K556 serves as a coordination point for ATP. Residues 877-949 (MAGLIDKEAE…QEQQDKIKAL (73 aa)) are a coiled coil.

This sequence belongs to the class-I aminoacyl-tRNA synthetase family. ValS type 1 subfamily. In terms of assembly, monomer.

It localises to the cytoplasm. The enzyme catalyses tRNA(Val) + L-valine + ATP = L-valyl-tRNA(Val) + AMP + diphosphate. In terms of biological role, catalyzes the attachment of valine to tRNA(Val). As ValRS can inadvertently accommodate and process structurally similar amino acids such as threonine, to avoid such errors, it has a 'posttransfer' editing activity that hydrolyzes mischarged Thr-tRNA(Val) in a tRNA-dependent manner. This Idiomarina loihiensis (strain ATCC BAA-735 / DSM 15497 / L2-TR) protein is Valine--tRNA ligase.